A 94-amino-acid chain; its full sequence is Co-chaperonin GroES (94 aa).

Belongs to the GroES chaperonin family. In terms of assembly, heptamer of 7 subunits arranged in a ring. Interacts with the chaperonin GroEL.

The protein localises to the cytoplasm. Together with the chaperonin GroEL, plays an essential role in assisting protein folding. The GroEL-GroES system forms a nano-cage that allows encapsulation of the non-native substrate proteins and provides a physical environment optimized to promote and accelerate protein folding. GroES binds to the apical surface of the GroEL ring, thereby capping the opening of the GroEL channel. The polypeptide is Co-chaperonin GroES (Alkaliphilus metalliredigens (strain QYMF)).